Here is a 458-residue protein sequence, read N- to C-terminus: ATP synthase subunit beta (458 aa).

Residue 148–155 (GGAGVGKT) participates in ATP binding.

The protein belongs to the ATPase alpha/beta chains family. As to quaternary structure, F-type ATPases have 2 components, CF(1) - the catalytic core - and CF(0) - the membrane proton channel. CF(1) has five subunits: alpha(3), beta(3), gamma(1), delta(1), epsilon(1). CF(0) has three main subunits: a(1), b(2) and c(9-12). The alpha and beta chains form an alternating ring which encloses part of the gamma chain. CF(1) is attached to CF(0) by a central stalk formed by the gamma and epsilon chains, while a peripheral stalk is formed by the delta and b chains.

Its subcellular location is the cell inner membrane. The catalysed reaction is ATP + H2O + 4 H(+)(in) = ADP + phosphate + 5 H(+)(out). In terms of biological role, produces ATP from ADP in the presence of a proton gradient across the membrane. The catalytic sites are hosted primarily by the beta subunits. The sequence is that of ATP synthase subunit beta from Shewanella halifaxensis (strain HAW-EB4).